The following is a 305-amino-acid chain: MEPLDLTCDLTSLNGKSAFITGGASGLGLATARKWAEAGVYITIADIQPPTSPVQPGLAHCFHYVYCDVTSWESQVAAFKSALRFSPSGALDIVACFAGTALAPGNQIDHVLAAGVPSLEVDPPRPSSSVRNIEVNLVGSYFTSWLGLYYLRIPGTGTDPELPSNKCLLFCASIAAYMDSPKASTYPASKFGVRGLFRSTRSQTKQLGVRCNLLAPWFFDSPLIAPIKHAMAARGVDMAKVLTFTSIDACVDAATYCVASPEIHGRALAVQPEGTFDLKDDLEDGWGGNQLRPIMQRRRDAGFDV.

Residues S25, L27, Q48, D68, Y186, K190, and S221 each coordinate NADP(+). Y186 serves as the catalytic Proton acceptor. K190 (lowers pKa of active site Tyr) is an active-site residue.

The protein belongs to the short-chain dehydrogenases/reductases (SDR) family.

It catalyses the reaction (1'S,5'S)-5'-hydroxyaverantin + NAD(+) = (S)-5'-oxoaverantin + NADH + H(+). The catalysed reaction is (1'S,5'R)-5'-hydroxyaverantin + NAD(+) = (S)-5'-oxoaverantin + NADH + 2 H(+). The protein operates within mycotoxin biosynthesis; sterigmatocystin biosynthesis. In terms of biological role, 5'-hydroxyaverantin dehydrogenase; part of the gene cluster that mediates the biosynthesis of sterigmatocystin (ST), a polyketide-derived furanocoumarin which is part of the most toxic and carcinogenic compounds among the known mycotoxins. The first step in the biosynthesis of sterigmatocystin is the production of hexanoate by the fatty acid synthase (FAS) units stcJ and stcK. The polyketide backbone is assembled by the non-reducing polyketide synthase stcA by condensation of the starter hexanoyl-CoA and 7 malonyl-CoA extender units followed by cyclization and release of norsolorinic acid. Norsolorinic acid is the first stable intermediate in the biosynthesis of sterigmatocystin and is converted into averantin (AVN) by the ketoreductase stcE which reduces the hexanoate ketone to an alcohol. Averantin is then oxidized into 5'-hydroxyaverantin (HAVN) by the cytochrome P450 monooxygenase stcF. 5'-hydroxyaverantin is further converted to 5'-oxyaverantin (OAVN) by the 5'-hydroxyaverantin dehydrogenase stcG. The next step is the conversion of OAVN into averufin (AVF) which is catalyzed by a yet to be identified enzyme. The cytochrome P450 monooxygenase stcB and the flavin-binding monooxygenase stcW are both required for the conversion of averufin to 1-hydroxyversicolorone. The esterase stcI probably catalyzes the formation of versiconal hemiacetal acetate from 1-hydroxyversicolorone. The oxydoreductase stcN then probably catalyzes the biosynthetic step from versiconal to versicolorin B (VERB). The next step is performed by the versicolorin B desaturase stcL to produce versicolorin A (VERA). The ketoreductase stcU and the cytochrome P450 monooxygenase stcS are involved in the conversion of versicolorin A to demethylsterigmatocystin. The Baeyer-Villiger oxidas stcQ and the reductase stcR might be involved in the biosynthetic step from versicolorin A to demethylsterigmatocystin. The final step in the biosynthesis of sterigmatocystin is the methylation of demethylsterigmatocystin catalyzed by the methyltransferase stcP. The polypeptide is 5'-hydroxyaverantin dehydrogenase stcG (Emericella nidulans (strain FGSC A4 / ATCC 38163 / CBS 112.46 / NRRL 194 / M139) (Aspergillus nidulans)).